Here is a 438-residue protein sequence, read N- to C-terminus: 23S rRNA (uracil(1939)-C(5))-methyltransferase RlmD (438 aa).

One can recognise a TRAM domain in the interval 8 to 68; that stretch reads KQKTNNVQTI…RQYGHATAKK (61 aa). [4Fe-4S] cluster contacts are provided by Cys81, Cys87, Cys90, and Cys168. The S-adenosyl-L-methionine site is built by Gln271, Phe300, Asn305, Glu321, Asp348, and Asp369. Cys395 serves as the catalytic Nucleophile.

This sequence belongs to the class I-like SAM-binding methyltransferase superfamily. RNA M5U methyltransferase family. RlmD subfamily.

It catalyses the reaction uridine(1939) in 23S rRNA + S-adenosyl-L-methionine = 5-methyluridine(1939) in 23S rRNA + S-adenosyl-L-homocysteine + H(+). In terms of biological role, catalyzes the formation of 5-methyl-uridine at position 1939 (m5U1939) in 23S rRNA. This Haemophilus influenzae (strain 86-028NP) protein is 23S rRNA (uracil(1939)-C(5))-methyltransferase RlmD.